Consider the following 369-residue polypeptide: UDP-N-acetylglucosamine--N-acetylmuramyl-(pentapeptide) pyrophosphoryl-undecaprenol N-acetylglucosamine transferase (369 aa).

Residues threonine 10–glycine 12, asparagine 124, serine 195, isoleucine 252, and glutamine 297 contribute to the UDP-N-acetyl-alpha-D-glucosamine site.

Belongs to the glycosyltransferase 28 family. MurG subfamily.

Its subcellular location is the cell membrane. The enzyme catalyses Mur2Ac(oyl-L-Ala-gamma-D-Glu-L-Lys-D-Ala-D-Ala)-di-trans,octa-cis-undecaprenyl diphosphate + UDP-N-acetyl-alpha-D-glucosamine = beta-D-GlcNAc-(1-&gt;4)-Mur2Ac(oyl-L-Ala-gamma-D-Glu-L-Lys-D-Ala-D-Ala)-di-trans,octa-cis-undecaprenyl diphosphate + UDP + H(+). The protein operates within cell wall biogenesis; peptidoglycan biosynthesis. In terms of biological role, cell wall formation. Catalyzes the transfer of a GlcNAc subunit on undecaprenyl-pyrophosphoryl-MurNAc-pentapeptide (lipid intermediate I) to form undecaprenyl-pyrophosphoryl-MurNAc-(pentapeptide)GlcNAc (lipid intermediate II). The polypeptide is UDP-N-acetylglucosamine--N-acetylmuramyl-(pentapeptide) pyrophosphoryl-undecaprenol N-acetylglucosamine transferase (Leuconostoc citreum (strain KM20)).